Here is a 416-residue protein sequence, read N- to C-terminus: MSLVAIGINHKTATVDLREKVAFSPDKIHDAMKSLASRTRSGEAVIVSTCNRTELYCNNGDEADIIEWLEEYHGLDHKDVAPCLYNYHGQTAVKHLMRVASGLDSLILGEPQILGQVKQAFAKAKEAGTVALTIDRLFQNTFSVAKKVRTETEIGAAAVSVAFAAVSMAKHIFSSLSTTKVLLIGAGETIELVAKHLKDNGVASMVVANRTLERAQGMCEEFGATAITLAQIPDYLPKADIVISSTASPLPILGKGMVEKALKQRRHQPMLLVDIAVPRDIEPEVADLDDAFLYTVDDLHSIIEQNMASRKEAAEQAELITEEQSYLFMDWVRSLESVDSIREYRNQSMAIKDELVERALNKLAQGGDTEQVLIELANRLTNKLIHAPTQALTAASRQGDLNTLGQLRTALGLDKN.

Residues 49–52, Ser105, 110–112, and Gln116 each bind substrate; these read TCNR and EPQ. Cys50 (nucleophile) is an active-site residue. 185 to 190 contributes to the NADP(+) binding site; sequence GAGETI.

The protein belongs to the glutamyl-tRNA reductase family. Homodimer.

The catalysed reaction is (S)-4-amino-5-oxopentanoate + tRNA(Glu) + NADP(+) = L-glutamyl-tRNA(Glu) + NADPH + H(+). The protein operates within porphyrin-containing compound metabolism; protoporphyrin-IX biosynthesis; 5-aminolevulinate from L-glutamyl-tRNA(Glu): step 1/2. Functionally, catalyzes the NADPH-dependent reduction of glutamyl-tRNA(Glu) to glutamate 1-semialdehyde (GSA). This Shewanella putrefaciens (strain CN-32 / ATCC BAA-453) protein is Glutamyl-tRNA reductase.